A 506-amino-acid polypeptide reads, in one-letter code: Histidine ammonia-lyase (506 aa).

Positions 143-145 (ASG) form a cross-link, 5-imidazolinone (Ala-Gly). At serine 144 the chain carries 2,3-didehydroalanine (Ser).

The protein belongs to the PAL/histidase family. In terms of processing, contains an active site 4-methylidene-imidazol-5-one (MIO), which is formed autocatalytically by cyclization and dehydration of residues Ala-Ser-Gly.

It localises to the cytoplasm. The enzyme catalyses L-histidine = trans-urocanate + NH4(+). It functions in the pathway amino-acid degradation; L-histidine degradation into L-glutamate; N-formimidoyl-L-glutamate from L-histidine: step 1/3. In Salmonella paratyphi A (strain ATCC 9150 / SARB42), this protein is Histidine ammonia-lyase.